A 171-amino-acid chain; its full sequence is UPF0312 protein SE_0264 (171 aa).

Belongs to the UPF0312 family.

This is UPF0312 protein SE_0264 from Staphylococcus epidermidis (strain ATCC 12228 / FDA PCI 1200).